The chain runs to 372 residues: Phenylalanine--tRNA ligase alpha subunit (372 aa).

Residue E276 coordinates Mg(2+).

The protein belongs to the class-II aminoacyl-tRNA synthetase family. Phe-tRNA synthetase alpha subunit type 1 subfamily. As to quaternary structure, tetramer of two alpha and two beta subunits. It depends on Mg(2+) as a cofactor.

The protein resides in the cytoplasm. The enzyme catalyses tRNA(Phe) + L-phenylalanine + ATP = L-phenylalanyl-tRNA(Phe) + AMP + diphosphate + H(+). The chain is Phenylalanine--tRNA ligase alpha subunit from Thermobifida fusca (strain YX).